We begin with the raw amino-acid sequence, 547 residues long: MQHNTYIYILTMKLLGFALAILLVVATCKPEEEITCEENVPFTCSQTDRFNKQDFESDFIFGVASSAYQIEGGRGRGLNVWDGFTHRYPEKGGADLGNGDTTCDSYRTWQKDLDVMEELGVKGYRFSFAWSRILPKGKRSRGINEDGINYYSGLIDGLIARNITPFVTLFHWDLPQSLQDEYEGFLDRTIIDDFKDYADLCFERFGDRVKHWITINQLFTVPTRGYALGTDAPGRCSQWVDKRCYGGDSSTEPYIVAHNQLLAHATVVDLYRTRYKYQGGKIGPVMITRWFLPYDDTLESKQATWRAKEFFLGWFMEPLTKGKYPYIMRKLVGNRLPKFNSTEARLLKGSYDFLGLNYYVTQYAHALDPSPPEKLTAMTDSLANLTSLDANGQPPGPPFSKGSYYHPRGMLNVMEHFKTKYGDPLIYVTENGFSTSGGPIPFTEAFHDYNRIDYLCSHLCFLRKAIKEKRVNVKGYFVWSLGDNYEFCNGYTVRFGLSYVDFNNVTADRDLKASGLWYQSFLRDTTKNQDILRSSLPFKNGDRKSLT.

A signal peptide spans 1–28 (MQHNTYIYILTMKLLGFALAILLVVATC). 3 disulfides stabilise this stretch: cysteine 36–cysteine 460, cysteine 44–cysteine 456, and cysteine 236–cysteine 244. A beta-D-glucoside contacts are provided by residues glutamine 69, histidine 171, and 216 to 217 (NQ). Asparagine 340 is a glycosylation site (N-linked (GlcNAc...) asparagine). Residue tyrosine 359 coordinates a beta-D-glucoside. A glycan (N-linked (GlcNAc...) asparagine) is linked at asparagine 384. Residues glutamate 430, tryptophan 479, 486 to 487 (EF), and phenylalanine 495 each bind a beta-D-glucoside. Glutamate 430 acts as the Nucleophile in catalysis. Asparagine 504 carries N-linked (GlcNAc...) asparagine glycosylation.

This sequence belongs to the glycosyl hydrolase 1 family. Interacts with MVP1. Expressed in phloem-associated cells.

It catalyses the reaction a thioglucoside + H2O = a sugar + a thiol.. Functionally, may degrade glucosinolates (glucose residue linked by a thioglucoside bound to an amino acid derivative) to glucose, sulfate and any of the products: thiocyanates, isothiocyanates, nitriles, epithionitriles or oxazolidine-2-thiones. These toxic degradation products can deter insect herbivores. Seems to function in abscisic acid (ABA) and methyl jasmonate (MeJA) signaling in guard cells. Functionally redundant with TGG1. In Arabidopsis thaliana (Mouse-ear cress), this protein is Myrosinase 2.